Reading from the N-terminus, the 896-residue chain is Desmocollin-3 (896 aa).

The first 27 residues, 1–27 (MAAAGPRRSVRGAVCLHLLLTLVIFSR), serve as a signal peptide directing secretion. The propeptide occupies 28-135 (AGEACKKVIL…RETVLRRAKR (108 aa)). Cadherin domains follow at residues 136 to 243 (RWAP…HPVF), 244 to 355 (TEAI…APTF), 356 to 471 (RQNA…GPEC), 472 to 579 (TPAA…EILQ), and 580 to 690 (EYVV…ILGK). The Extracellular portion of the chain corresponds to 136 to 690 (RWAPIPCSMQ…SRSTGVILGK (555 aa)). The N-linked (GlcNAc...) asparagine glycan is linked to N166. 3 N-linked (GlcNAc...) asparagine glycosylation sites follow: N392, N546, and N629. The helical transmembrane segment at 691 to 711 (WAILAILLGIALLFSVLLTLV) threads the bilayer. Residues 712 to 896 (CGVFGATKGK…ITLAEACTKR (185 aa)) lie on the Cytoplasmic side of the membrane.

May form homodimers. Interacts with DSG1; there is evidence to suggest that the interaction promotes cell-cell adhesion of keratinocytes. Expressed throughout the basal and spinous layer of the epidermis with weak expression in the granular layer (at protein level). Also expressed in the buccal mucosa, esophagus and cervix (at protein level).

Its subcellular location is the cell membrane. The protein resides in the cell junction. It is found in the desmosome. The protein localises to the cytoplasm. In terms of biological role, a component of desmosome cell-cell junctions which are required for positive regulation of cellular adhesion. Required for cell-cell adhesion in the epidermis, as a result required for the maintenance of the dermal cohesion and the dermal barrier function. Required for cell-cell adhesion of epithelial cell layers surrounding the telogen hair club, as a result plays an important role in telogen hair shaft anchorage. Essential for successful completion of embryo compaction and embryo development. In Homo sapiens (Human), this protein is Desmocollin-3 (DSC3).